The primary structure comprises 834 residues: ATP-dependent RNA helicase ddx23 (834 aa).

Disordered regions lie at residues methionine 1–serine 245 and phenylalanine 322–isoleucine 371. A compositionally biased stretch (basic and acidic residues) spans serine 10 to proline 25. Polar residues predominate over residues serine 42–glutamine 54. 4 stretches are compositionally biased toward basic and acidic residues: residues glycine 70 to aspartate 110, glycine 117 to glycine 164, arginine 171 to aspartate 205, and aspartate 231 to serine 245. Residues asparagine 328–asparagine 362 show a composition bias toward low complexity. The short motif at arginine 413–methionine 441 is the Q motif element. The Helicase ATP-binding domain occupies isoleucine 444 to isoleucine 643. Alanine 457–threonine 464 is a binding site for ATP. Positions aspartate 570–aspartate 573 match the DEAD box motif. A Helicase C-terminal domain is found at arginine 654–proline 815. The interval lysine 813–lysine 834 is disordered. Positions serine 823–lysine 834 are enriched in basic and acidic residues.

It belongs to the DEAD box helicase family. DDX23/PRP28 subfamily.

Its subcellular location is the cytoplasm. It is found in the nucleus. The enzyme catalyses ATP + H2O = ADP + phosphate + H(+). In terms of biological role, probable ATP-dependent RNA helicase which may be involved in mRNA splicing. This chain is ATP-dependent RNA helicase ddx23 (helB2), found in Dictyostelium discoideum (Social amoeba).